The sequence spans 40 residues: MGVLKRRVSSSRGLGGVLREQRAKLYIIKRCVVMLLCWQD.

The segment at 9–40 is required for DVL/RTFL small polypeptide activity; that stretch reads SSSRGLGGVLREQRAKLYIIKRCVVMLLCWQD. Residues 12–28 form a helical membrane-spanning segment; the sequence is RGLGGVLREQRAKLYII.

Belongs to the DVL/RTFL small polypeptides family.

It is found in the cell membrane. Small polypeptide acting as a regulatory molecule which coordinates cellular responses required for differentiation, growth and development, probably by restricting polar cell proliferation in lateral organs and coordinating socket cell recruitment and differentiation at trichome sites. The chain is Small polypeptide DEVIL 6 from Arabidopsis thaliana (Mouse-ear cress).